A 265-amino-acid polypeptide reads, in one-letter code: Type III pantothenate kinase (265 aa).

6–13 (DVGNTHTV) contacts ATP. Residue 112–115 (GADR) participates in substrate binding. D114 acts as the Proton acceptor in catalysis. D134 is a binding site for K(+). Residue T137 coordinates ATP. T189 contacts substrate.

The protein belongs to the type III pantothenate kinase family. Homodimer. It depends on NH4(+) as a cofactor. K(+) serves as cofactor.

The protein resides in the cytoplasm. The catalysed reaction is (R)-pantothenate + ATP = (R)-4'-phosphopantothenate + ADP + H(+). It participates in cofactor biosynthesis; coenzyme A biosynthesis; CoA from (R)-pantothenate: step 1/5. In terms of biological role, catalyzes the phosphorylation of pantothenate (Pan), the first step in CoA biosynthesis. The polypeptide is Type III pantothenate kinase (Streptomyces griseus subsp. griseus (strain JCM 4626 / CBS 651.72 / NBRC 13350 / KCC S-0626 / ISP 5235)).